A 202-amino-acid polypeptide reads, in one-letter code: Urease accessory protein UreF (202 aa).

This sequence belongs to the UreF family. UreD, UreF and UreG form a complex that acts as a GTP-hydrolysis-dependent molecular chaperone, activating the urease apoprotein by helping to assemble the nickel containing metallocenter of UreC. The UreE protein probably delivers the nickel.

The protein resides in the cytoplasm. Its function is as follows. Required for maturation of urease via the functional incorporation of the urease nickel metallocenter. This is Urease accessory protein UreF from Sporosarcina pasteurii (Bacillus pasteurii).